The primary structure comprises 428 residues: Flotillin-2 (428 aa).

Residues C4, C19, and C20 are each lipidated (S-palmitoyl cysteine).

Belongs to the band 7/mec-2 family. Flotillin subfamily. Heterooligomeric complex of flotillins 1 and 2. In terms of processing, palmitoylation may be required for the formation of higher order complexes and for neurite outgrowth in cultured neural stem cells. In terms of tissue distribution, normally expressed in growing retinal exons of newly differentiated ganglion cells at the retinal margin. After optic nerve injury, expressed in all retinal ganglion cells and retinal axons. Also expressed in endothelial cells, spinal cord, larval and adult skin, muscle processes, thymus and gill macrophages.

The protein resides in the membrane. Its subcellular location is the endosome. Functionally, may play a role in axon growth and regeneration. May be involved in epidermal cell adhesion and epidermal structure and function. The sequence is that of Flotillin-2 (flot2) from Carassius auratus (Goldfish).